We begin with the raw amino-acid sequence, 844 residues long: MAAFAQYTLSTGWYFKDRDELASEAWMPVPVVPSVVHQDLQANGKLKNPYVGFNELDARWVNEKSWTYRKILQKPTVLAGSRIVLAFDGLDTFAKVKLDNNIILESSNMFQAYRVDVTKALDCGDEHVLEIEFDCAMLRAQELRKQDPNHNWASFNGDPARMSVRKAQYHWGWDWGPVLMTAGIWRAVRLEVYSTRLADLWTEINLDPTHKTASISAFTELESVDLDPSYKVKFTITLHGKQIAQAEATPQEGRAKVEFNIDQPCLWWPHGYGDSTLYEVSASLNADQLELHRVTKKIGIRTAEVVQRPDKHGKSFFFRINGVDIFCGGSCWIPADNLLPNISPQRYRKWIQLMVAGRQAMIRVWGGGCYEDDSFYEACDELGVLVWQDFMFGCGNYPTWPELLKSIEQEAIYNVRRLRHHPSIVVYVGNNEDYQVQEQAGLEYNYEDKNPENWLKTNFPARYIYEELLPSVVERCSPKTFYHPGSPWGDGKITSDPTVGDMHQWNVWHGTQEKYQIFDTLGGRFNSEFGMEAFPHLSTIEYFVENEKDKYPQSHVLDFHNKADGHERRIATYLVENLRTATDLETYIYLTQVVQAETMMFGYRGWRRQWGDERHCGGALLWQLNDCWPTISWAIVDYFLRPKPAYYAVARVLNPVAVGVRREHHDWSITHAQPPKTSKYELWVVSSLQKPASGKVELRFLSVDTGREIRERIVRENVDIVPNGTTNLITDGLIDHTVDAEPHVLAARLWVDGEIVARDVDWPQPFKYLDFADRGLEVKRVSEASDQQVFQISTEKPVKCLVFEERDGVKFSDSAMDIVPGDVQTVKVTGLRADEKLKYKFLGQ.

E432 (proton donor) is an active-site residue. N723 carries N-linked (GlcNAc...) asparagine glycosylation.

It belongs to the glycosyl hydrolase 2 family. Beta-mannosidase B subfamily.

The catalysed reaction is Hydrolysis of terminal, non-reducing beta-D-mannose residues in beta-D-mannosides.. It functions in the pathway glycan metabolism; N-glycan degradation. In terms of biological role, exoglycosidase that cleaves the single beta-linked mannose residue from the non-reducing end of beta-mannosidic oligosaccharides of various complexity and length. Prefers mannobiose over mannotriose and has no activity against polymeric mannan. Is also severely restricted by galactosyl substitutions at the +1 subsite. This is Beta-mannosidase B (mndB) from Aspergillus niger (strain ATCC MYA-4892 / CBS 513.88 / FGSC A1513).